The sequence spans 63 residues: Large ribosomal subunit protein uL29 (63 aa).

It belongs to the universal ribosomal protein uL29 family.

This chain is Large ribosomal subunit protein uL29, found in Marinomonas sp. (strain MWYL1).